Consider the following 278-residue polypeptide: Pantothenate synthetase (278 aa).

Residue 26-33 (MGNLHEGH) participates in ATP binding. H33 functions as the Proton donor in the catalytic mechanism. (R)-pantoate is bound at residue Q57. Q57 is a beta-alanine binding site. 144–147 (GKKD) serves as a coordination point for ATP. Q150 serves as a coordination point for (R)-pantoate. Residues G173 and 181-184 (LSSR) each bind ATP.

It belongs to the pantothenate synthetase family. Homodimer.

Its subcellular location is the cytoplasm. It carries out the reaction (R)-pantoate + beta-alanine + ATP = (R)-pantothenate + AMP + diphosphate + H(+). It participates in cofactor biosynthesis; (R)-pantothenate biosynthesis; (R)-pantothenate from (R)-pantoate and beta-alanine: step 1/1. In terms of biological role, catalyzes the condensation of pantoate with beta-alanine in an ATP-dependent reaction via a pantoyl-adenylate intermediate. This Neisseria meningitidis serogroup B (strain ATCC BAA-335 / MC58) protein is Pantothenate synthetase.